The sequence spans 160 residues: Small ribosomal subunit protein uS10m (160 aa).

It belongs to the universal ribosomal protein uS10 family. Component of the mitochondrial ribosome small subunit (28S) which comprises a 12S rRNA and about 30 distinct proteins.

It is found in the mitochondrion. This is Small ribosomal subunit protein uS10m (Mrps10) from Mus musculus (Mouse).